A 396-amino-acid polypeptide reads, in one-letter code: Elongation factor Tu 2 (396 aa).

The 197-residue stretch at 10–206 (KPHVNIGTIG…AVDEYIPTPE (197 aa)) folds into the tr-type G domain. A G1 region spans residues 19–26 (GHVDHGKT). 19 to 26 (GHVDHGKT) contacts GTP. T26 contributes to the Mg(2+) binding site. Residues 60-64 (GITIN) are G2. The tract at residues 81 to 84 (DCPG) is G3. GTP-binding positions include 81–85 (DCPGH) and 136–139 (NKVD). A G4 region spans residues 136–139 (NKVD). Positions 174–176 (SAL) are G5.

Belongs to the TRAFAC class translation factor GTPase superfamily. Classic translation factor GTPase family. EF-Tu/EF-1A subfamily. In terms of assembly, monomer.

It is found in the cytoplasm. The enzyme catalyses GTP + H2O = GDP + phosphate + H(+). In terms of biological role, GTP hydrolase that promotes the GTP-dependent binding of aminoacyl-tRNA to the A-site of ribosomes during protein biosynthesis. The protein is Elongation factor Tu 2 of Hyphomonas neptunium (strain ATCC 15444).